The primary structure comprises 187 residues: Large ribosomal subunit protein uL6c (187 aa).

It belongs to the universal ribosomal protein uL6 family. Part of the 50S ribosomal subunit.

It localises to the plastid. The protein resides in the chloroplast. In terms of biological role, binds 23S rRNA. In Thalassiosira pseudonana (Marine diatom), this protein is Large ribosomal subunit protein uL6c (rpl6).